The following is a 376-amino-acid chain: Alcohol dehydrogenase class-3 (376 aa).

Residue Ala1 is modified to N-acetylalanine. 7 residues coordinate Zn(2+): Cys47, His69, Cys99, Cys102, Cys105, Cys113, and Cys176.

It belongs to the zinc-containing alcohol dehydrogenase family. Class-III subfamily. Homodimer. The cofactor is Zn(2+).

It localises to the cytoplasm. It catalyses the reaction a primary alcohol + NAD(+) = an aldehyde + NADH + H(+). The enzyme catalyses a secondary alcohol + NAD(+) = a ketone + NADH + H(+). The catalysed reaction is S-(hydroxymethyl)glutathione + NADP(+) = S-formylglutathione + NADPH + H(+). It carries out the reaction S-(hydroxymethyl)glutathione + NAD(+) = S-formylglutathione + NADH + H(+). It catalyses the reaction S-nitrosoglutathione + NADH + H(+) = S-(hydroxysulfenamide)glutathione + NAD(+). Functionally, class-III ADH is remarkably ineffective in oxidizing ethanol, but it readily catalyzes the oxidation of long-chain primary alcohols and the oxidation of S-(hydroxymethyl) glutathione. Also acts as a S-nitroso-glutathione reductase by catalyzing the NADH-dependent reduction of S-nitrosoglutathione, thereby regulating protein S-nitrosylation. The polypeptide is Alcohol dehydrogenase class-3 (Scyliorhinus canicula (Small-spotted catshark)).